The chain runs to 761 residues: Ribonucleoside-diphosphate reductase 1 subunit alpha (761 aa).

The ATP-cone domain occupies 5–95; it reads LLVTKRDGRT…IFHLRKKAFG (91 aa). ATP contacts are provided by residues Lys-9, 15–21, Thr-55, and Lys-91; that span reads ERINLDK. A GDP-binding site is contributed by Thr-209. Cys-225 and Cys-462 form a disulfide bridge. DTTP-binding positions include 232 to 234, Arg-262, and Arg-269; that span reads DSL. Asn-437 serves as a coordination point for GDP. Catalysis depends on Asn-437, which acts as the Proton acceptor. The Cysteine radical intermediate role is filled by Cys-439. GDP is bound by residues Glu-441 and 623 to 625; that span reads ETS. Glu-441 functions as the Proton acceptor in the catalytic mechanism.

The protein belongs to the ribonucleoside diphosphate reductase large chain family. In terms of assembly, tetramer of two alpha (R1) and two beta (R2) subunits. The B1 protein is a dimer of alpha subunits. A radical transfer pathway occurs between 'Tyr-122' of R2 and R1.

It catalyses the reaction a 2'-deoxyribonucleoside 5'-diphosphate + [thioredoxin]-disulfide + H2O = a ribonucleoside 5'-diphosphate + [thioredoxin]-dithiol. Its activity is regulated as follows. Under complex allosteric control mediated by deoxynucleoside triphosphates and ATP binding to separate specificity and activation sites on the alpha subunit. The type of nucleotide bound at the specificity site determines substrate preference. It seems probable that ATP makes the enzyme reduce CDP and UDP, dGTP favors ADP reduction and dTTP favors GDP reduction. Stimulated by ATP and inhibited by dATP binding to the activity site. Provides the precursors necessary for DNA synthesis. Catalyzes the biosynthesis of deoxyribonucleotides from the corresponding ribonucleotides. R1 contains the binding sites for both substrates and allosteric effectors and carries out the actual reduction of the ribonucleotide. This chain is Ribonucleoside-diphosphate reductase 1 subunit alpha (nrdA), found in Salmonella typhimurium (strain LT2 / SGSC1412 / ATCC 700720).